Reading from the N-terminus, the 157-residue chain is Transcription elongation factor GreA (157 aa).

The stretch at 47-75 (SGEYEDAKKAQALLEGRIRELKHLLSRAE) forms a coiled coil.

It belongs to the GreA/GreB family.

Functionally, necessary for efficient RNA polymerase transcription elongation past template-encoded arresting sites. The arresting sites in DNA have the property of trapping a certain fraction of elongating RNA polymerases that pass through, resulting in locked ternary complexes. Cleavage of the nascent transcript by cleavage factors such as GreA or GreB allows the resumption of elongation from the new 3'terminus. GreA releases sequences of 2 to 3 nucleotides. The protein is Transcription elongation factor GreA of Chloroflexus aurantiacus (strain ATCC 29366 / DSM 635 / J-10-fl).